The following is a 519-amino-acid chain: Cytosol aminopeptidase (519 aa).

Serine 42 carries the phosphoserine modification. The residue at position 45 (lysine 45) is an N6-succinyllysine. At serine 54 the chain carries Phosphoserine. An N6-succinyllysine mark is found at lysine 61 and lysine 103. Residues serine 180 and serine 194 each carry the phosphoserine modification. 2 residues coordinate Zn(2+): leucine 202 and methionine 203. Lysine 221 carries the post-translational modification N6-acetyllysine; alternate. Lysine 221 bears the N6-succinyllysine; alternate mark. Position 238 is a phosphoserine (serine 238). Zn(2+)-binding residues include lysine 282 and aspartate 287. Lysine 282, aspartate 287, serine 292, and lysine 294 together coordinate substrate. Residue aspartate 287 coordinates Mg(2+). Residue lysine 294 is part of the active site. Positions 303, 305, 364, and 366 each coordinate Zn(2+). Aspartate 305 and aspartate 364 together coordinate substrate. Positions 364 and 366 each coordinate Mg(2+). Arginine 368 is an active-site residue. Lysine 455 carries the N6-acetyllysine; alternate modification. At lysine 455 the chain carries N6-succinyllysine; alternate. An N6-succinyllysine modification is found at lysine 476. Lysine 489 is subject to N6-acetyllysine; alternate. Lysine 489 is modified (N6-succinyllysine; alternate).

The protein belongs to the peptidase M17 family. As to quaternary structure, homohexamer. Zn(2+) is required as a cofactor. It depends on Mn(2+) as a cofactor.

The protein resides in the cytoplasm. The enzyme catalyses Release of an N-terminal amino acid, Xaa-|-Yaa-, in which Xaa is preferably Leu, but may be other amino acids including Pro although not Arg or Lys, and Yaa may be Pro. Amino acid amides and methyl esters are also readily hydrolyzed, but rates on arylamides are exceedingly low.. It catalyses the reaction an S-substituted L-cysteinylglycine + H2O = an S-substituted L-cysteine + glycine. The catalysed reaction is L-cysteinylglycine + H2O = L-cysteine + glycine. It carries out the reaction S-benzyl-L-cysteinylglycine + H2O = S-benzyl-L-cysteine + glycine. The enzyme catalyses Release of N-terminal proline from a peptide.. Its activity is regulated as follows. Bimane-S-cysteinylglycine-hydrolyzing activity is inhibited by o-phenanthroline or bestatin, and is activated by the addition of zinc chloride. In terms of biological role, cytosolic metallopeptidase that catalyzes the removal of unsubstituted N-terminal hydrophobic amino acids from various peptides. The presence of Zn(2+) ions is essential for the peptidase activity, and the association with other cofactors can modulate the substrate spectificity of the enzyme. For instance, in the presence of Mn(2+), it displays a specific Cys-Gly hydrolyzing activity of Cys-Gly-S-conjugates. Involved in the metabolism of glutathione and in the degradation of glutathione S-conjugates, which may play a role in the control of the cell redox status. This Rattus norvegicus (Rat) protein is Cytosol aminopeptidase.